The following is a 317-amino-acid chain: Tyrosine--tRNA ligase (317 aa).

Tyr-32 contributes to the L-tyrosine binding site. The 'HIGH' region signature appears at 37 to 45 (PSGEIHLGH). L-tyrosine-binding residues include Tyr-152, Gln-156, Asp-159, and Gln-174. The short motif at 208–212 (KMSSS) is the 'KMSKS' region element. Ser-211 is an ATP binding site.

Belongs to the class-I aminoacyl-tRNA synthetase family. TyrS type 3 subfamily. In terms of assembly, homodimer.

Its subcellular location is the cytoplasm. It carries out the reaction tRNA(Tyr) + L-tyrosine + ATP = L-tyrosyl-tRNA(Tyr) + AMP + diphosphate + H(+). Functionally, catalyzes the attachment of tyrosine to tRNA(Tyr) in a two-step reaction: tyrosine is first activated by ATP to form Tyr-AMP and then transferred to the acceptor end of tRNA(Tyr). In Methanocorpusculum labreanum (strain ATCC 43576 / DSM 4855 / Z), this protein is Tyrosine--tRNA ligase.